Reading from the N-terminus, the 315-residue chain is Acetyl-coenzyme A carboxylase carboxyl transferase subunit alpha (315 aa).

The CoA carboxyltransferase C-terminal domain maps to 40 to 293 (LQDKSKTLTE…REELSSQLAM (254 aa)).

This sequence belongs to the AccA family. Acetyl-CoA carboxylase is a heterohexamer composed of biotin carboxyl carrier protein (AccB), biotin carboxylase (AccC) and two subunits each of ACCase subunit alpha (AccA) and ACCase subunit beta (AccD).

It localises to the cytoplasm. The catalysed reaction is N(6)-carboxybiotinyl-L-lysyl-[protein] + acetyl-CoA = N(6)-biotinyl-L-lysyl-[protein] + malonyl-CoA. It functions in the pathway lipid metabolism; malonyl-CoA biosynthesis; malonyl-CoA from acetyl-CoA: step 1/1. In terms of biological role, component of the acetyl coenzyme A carboxylase (ACC) complex. First, biotin carboxylase catalyzes the carboxylation of biotin on its carrier protein (BCCP) and then the CO(2) group is transferred by the carboxyltransferase to acetyl-CoA to form malonyl-CoA. The chain is Acetyl-coenzyme A carboxylase carboxyl transferase subunit alpha from Pseudomonas savastanoi pv. phaseolicola (strain 1448A / Race 6) (Pseudomonas syringae pv. phaseolicola (strain 1448A / Race 6)).